A 758-amino-acid chain; its full sequence is MAVSARSARTSPGSDKVQKDKAELISGPRQDSLMGKLLGFEWTDLSSWRRLVTLLNRPTDPASLAVFRFLFGFLMVLDIPQERGLSSLDRKYLDGLDVCRFPLLDALRPLPLDWMYLVYTIMFLGALGMMLGLCYRISCVLFLLPYWYVFLLDKTSWNNHSYLYGLLAFQLTFMDANHYWSVDGLLNARRRNAHVPLWNYAVLRGQIFIVYFIAGVKKLDADWVEGYSMEYLSRHWLFSPFKLLLSEELTSLLVVHWGGLLLDLSAGFLLFFDASRSIGLFFVSYFHCMNSQLFSIGMFSYVMLASSPLFCSPEWPRKLVSYCPQRLQELLPLKAAPQPSVSCVYKRSRGKSGQKPGLRHQLGAAFTLLYLLEQLFLPYSHFLTQGYNNWTNGLYGYSWDMMVHSRSHQHVKITYRDGRTGELGYLNPGVFTQSRRWKDHADMLKQYATCLSRLLPKYNVTEPQIYFDIWVSINDRFQQRIFDPRVDIVQAAWSPFQRTSWVQPLLMDLSPWRAKLQEIKSSLDNHTEVVFIADFPGLHLENFVSEDLGNTSIQLLQGEVTVELVAEQKNQTLREGEKMQLPAGEYHKVYTTSPSPSCYMYVYVNTTELALEQDLAYLQELKEKVENGSETGPLPPELQPLLEGEVKGGPEPTPLVQTFLRRQQRLQEIERRRNTPFHERFFRFLLRKLYVFRRSFLMTCISLRNLILGRPSLEQLAQEVTYANLRPFEQVGELSPSNMDSSHSNPPESNPDPVHSEF.

A disordered region spans residues 1-21; it reads MAVSARSARTSPGSDKVQKDK. N-acetylalanine is present on A2. Topologically, residues 2–60 are cytoplasmic; sequence AVSARSARTSPGSDKVQKDKAELISGPRQDSLMGKLLGFEWTDLSSWRRLVTLLNRPTD. Residues 61-81 traverse the membrane as a helical segment; that stretch reads PASLAVFRFLFGFLMVLDIPQ. Residues 82–113 are Lumenal-facing; sequence ERGLSSLDRKYLDGLDVCRFPLLDALRPLPLD. C99 and C450 are disulfide-bonded. Residues 114–134 traverse the membrane as a helical segment; the sequence is WMYLVYTIMFLGALGMMLGLC. The Cytoplasmic segment spans residues 135–136; sequence YR. A helical transmembrane segment spans residues 137–157; that stretch reads ISCVLFLLPYWYVFLLDKTSW. The Lumenal segment spans residues 158-292; that stretch reads NNHSYLYGLL…VSYFHCMNSQ (135 aa). A helical transmembrane segment spans residues 293-313; the sequence is LFSIGMFSYVMLASSPLFCSP. The Cytoplasmic segment spans residues 314 to 361; that stretch reads EWPRKLVSYCPQRLQELLPLKAAPQPSVSCVYKRSRGKSGQKPGLRHQ. Residues 362-382 form a helical membrane-spanning segment; sequence LGAAFTLLYLLEQLFLPYSHF. Residues 383–758 lie on the Lumenal side of the membrane; it reads LTQGYNNWTN…SNPDPVHSEF (376 aa). The segment at 732-758 is disordered; sequence GELSPSNMDSSHSNPPESNPDPVHSEF. A compositionally biased stretch (polar residues) spans 735 to 747; the sequence is SPSNMDSSHSNPP.

Belongs to the vitamin K-dependent gamma-carboxylase family. As to quaternary structure, monomer. May interact with CALU.

It is found in the endoplasmic reticulum membrane. It catalyses the reaction 4-carboxy-L-glutamyl-[protein] + 2,3-epoxyphylloquinone + H2O + H(+) = phylloquinol + L-glutamyl-[protein] + CO2 + O2. Mediates the vitamin K-dependent carboxylation of glutamate residues to calcium-binding gamma-carboxyglutamate (Gla) residues with the concomitant conversion of the reduced hydroquinone form of vitamin K to vitamin K epoxide. Catalyzes gamma-carboxylation of various proteins, such as blood coagulation factors (F2, F7, F9 and F10), osteocalcin (BGLAP) or matrix Gla protein (MGP). The protein is Vitamin K-dependent gamma-carboxylase (GGCX) of Pongo abelii (Sumatran orangutan).